The sequence spans 726 residues: Serine/threonine-protein kinase PKH3 (726 aa).

A Protein kinase domain is found at Phe-10–Phe-271. ATP contacts are provided by residues Leu-16–Val-24 and Lys-39. Asp-136 (proton acceptor) is an active-site residue. Residues Gln-629–Tyr-679 are disordered. A compositionally biased stretch (basic and acidic residues) spans Gln-663–Thr-673.

This sequence belongs to the protein kinase superfamily. Ser/Thr protein kinase family.

The enzyme catalyses L-seryl-[protein] + ATP = O-phospho-L-seryl-[protein] + ADP + H(+). The catalysed reaction is L-threonyl-[protein] + ATP = O-phospho-L-threonyl-[protein] + ADP + H(+). In terms of biological role, serine/threonine-protein kinase. This is Serine/threonine-protein kinase PKH3 (PKH3) from Eremothecium gossypii (strain ATCC 10895 / CBS 109.51 / FGSC 9923 / NRRL Y-1056) (Yeast).